The following is a 191-amino-acid chain: MKIILASKSPRRIELLKLLKIDFEVIPSNIDENISEKDPKLLAEKLSYLKAMSIKKDGVVLAADTVVTLDKEIFGKPRDYKDAFRMLKSLSGKWHTVITGVTIKFKDEVITFSEKTNVKFKNLSKELIEFYINTAKPFDKAGGYGIQELGSVLVEKIEGDYFNVVGLPISKVWDILWDRGMIDASKGEINK.

Aspartate 64 (proton acceptor) is an active-site residue.

The protein belongs to the Maf family. YhdE subfamily. The cofactor is a divalent metal cation.

It is found in the cytoplasm. The enzyme catalyses dTTP + H2O = dTMP + diphosphate + H(+). It catalyses the reaction UTP + H2O = UMP + diphosphate + H(+). Nucleoside triphosphate pyrophosphatase that hydrolyzes dTTP and UTP. May have a dual role in cell division arrest and in preventing the incorporation of modified nucleotides into cellular nucleic acids. In Thermosipho africanus (strain TCF52B), this protein is dTTP/UTP pyrophosphatase.